The sequence spans 317 residues: MPKTIAFKHDTVLLHETVDMLEVKPNGIYVDATLGGAGHSEYLLSKLTNGHLYSFDQDETAHENAKVRLSEQLAEDKVTLIKSNFRYLKSALAELGVTKIDGILYDLGVSSPQFDDSQRGFSYKKEARLDMRMDQNQTLSAYEVVNDYPYEALVRIFFRYGEDKFSKQIARKIEQARKIKPIETTIELADLIKSALPQKELKKKGHPAKRIFQAIRIEVNDELGAAEESIEQAIDLLKVDGRISVITFHSLEDRLTKTIFKEYSTVNVPKGLPMLPKDMEAKLKLINRKPVLASEEELEFNNRAHSAKLRVAQKQRD.

S-adenosyl-L-methionine is bound by residues 37 to 39 (AGH), Asp56, Phe85, Asp106, and Gln113.

Belongs to the methyltransferase superfamily. RsmH family.

It is found in the cytoplasm. It catalyses the reaction cytidine(1402) in 16S rRNA + S-adenosyl-L-methionine = N(4)-methylcytidine(1402) in 16S rRNA + S-adenosyl-L-homocysteine + H(+). In terms of biological role, specifically methylates the N4 position of cytidine in position 1402 (C1402) of 16S rRNA. The protein is Ribosomal RNA small subunit methyltransferase H of Lactococcus lactis subsp. lactis (strain IL1403) (Streptococcus lactis).